Here is a 244-residue protein sequence, read N- to C-terminus: Small ribosomal subunit protein eS4 (244 aa).

In terms of domain architecture, S4 RNA-binding spans 43–106 (LPLLLVVRDV…DETYLVLFDE (64 aa)).

It belongs to the eukaryotic ribosomal protein eS4 family.

The protein is Small ribosomal subunit protein eS4 of Methanococcus maripaludis (strain DSM 14266 / JCM 13030 / NBRC 101832 / S2 / LL).